Here is a 151-residue protein sequence, read N- to C-terminus: Large ribosomal subunit protein bL9 (151 aa).

This sequence belongs to the bacterial ribosomal protein bL9 family.

In terms of biological role, binds to the 23S rRNA. The protein is Large ribosomal subunit protein bL9 of Acidobacterium capsulatum (strain ATCC 51196 / DSM 11244 / BCRC 80197 / JCM 7670 / NBRC 15755 / NCIMB 13165 / 161).